A 366-amino-acid polypeptide reads, in one-letter code: tRNA/tmRNA (uracil-C(5))-methyltransferase (366 aa).

S-adenosyl-L-methionine contacts are provided by Q190, Y218, N223, E239, and D299. C324 functions as the Nucleophile in the catalytic mechanism. E358 functions as the Proton acceptor in the catalytic mechanism.

This sequence belongs to the class I-like SAM-binding methyltransferase superfamily. RNA M5U methyltransferase family. TrmA subfamily.

The catalysed reaction is uridine(54) in tRNA + S-adenosyl-L-methionine = 5-methyluridine(54) in tRNA + S-adenosyl-L-homocysteine + H(+). It carries out the reaction uridine(341) in tmRNA + S-adenosyl-L-methionine = 5-methyluridine(341) in tmRNA + S-adenosyl-L-homocysteine + H(+). Its function is as follows. Dual-specificity methyltransferase that catalyzes the formation of 5-methyluridine at position 54 (m5U54) in all tRNAs, and that of position 341 (m5U341) in tmRNA (transfer-mRNA). The protein is tRNA/tmRNA (uracil-C(5))-methyltransferase of Escherichia coli O6:H1 (strain CFT073 / ATCC 700928 / UPEC).